A 180-amino-acid polypeptide reads, in one-letter code: Dual-action ribosomal maturation protein DarP (180 aa).

Belongs to the DarP family.

Its subcellular location is the cytoplasm. Member of a network of 50S ribosomal subunit biogenesis factors which assembles along the 30S-50S interface, preventing incorrect 23S rRNA structures from forming. Promotes peptidyl transferase center (PTC) maturation. The protein is Dual-action ribosomal maturation protein DarP of Pasteurella multocida (strain Pm70).